Here is a 222-residue protein sequence, read N- to C-terminus: Cytidylate kinase (222 aa).

9 to 17 (GPAGSGKTT) is a binding site for ATP.

Belongs to the cytidylate kinase family. Type 1 subfamily.

It is found in the cytoplasm. The catalysed reaction is CMP + ATP = CDP + ADP. The enzyme catalyses dCMP + ATP = dCDP + ADP. The chain is Cytidylate kinase from Thermosipho africanus (strain TCF52B).